A 217-amino-acid polypeptide reads, in one-letter code: 3-dehydroquinate dehydratase (217 aa).

3-dehydroquinate-binding positions include 26–28 and Arg59; that span reads EFR. His114 serves as the catalytic Proton donor/acceptor. Catalysis depends on Lys140, which acts as the Schiff-base intermediate with substrate. 2 residues coordinate 3-dehydroquinate: Arg178 and Gln201.

The protein belongs to the type-I 3-dehydroquinase family. Homodimer.

It carries out the reaction 3-dehydroquinate = 3-dehydroshikimate + H2O. It participates in metabolic intermediate biosynthesis; chorismate biosynthesis; chorismate from D-erythrose 4-phosphate and phosphoenolpyruvate: step 3/7. Involved in the third step of the chorismate pathway, which leads to the biosynthesis of aromatic amino acids. Catalyzes the cis-dehydration of 3-dehydroquinate (DHQ) and introduces the first double bond of the aromatic ring to yield 3-dehydroshikimate. The sequence is that of 3-dehydroquinate dehydratase from Hydrogenobaculum sp. (strain Y04AAS1).